The following is a 317-amino-acid chain: Succinate receptor 1 (317 aa).

Residues Met-1–Gly-27 are Extracellular-facing. Asn-4 carries an N-linked (GlcNAc...) asparagine glycan. Residues Ile-28 to Met-48 traverse the membrane as a helical segment. The Cytoplasmic segment spans residues Lys-49–Asn-55. Residues Val-56 to Ile-76 traverse the membrane as a helical segment. Topologically, residues Arg-77–His-99 are extracellular. Cysteines 91 and 168 form a disulfide. Residues Ala-100 to Met-120 traverse the membrane as a helical segment. Topologically, residues Lys-121–Glu-133 are cytoplasmic. A helical membrane pass occupies residues Phe-134–Leu-154. Topologically, residues Thr-155–Leu-181 are extracellular. The helical transmembrane segment at Ile-182 to Phe-202 threads the bilayer. The Cytoplasmic portion of the chain corresponds to Tyr-203–Pro-226. The helical transmembrane segment at Leu-227–Met-247 threads the bilayer. Over Arg-248–Arg-276 the chain is Extracellular. A helical transmembrane segment spans residues Pro-277 to Phe-297. Residues Arg-298–Leu-317 lie on the Cytoplasmic side of the membrane.

It belongs to the G-protein coupled receptor 1 family. In terms of tissue distribution, expressed in retina.

Its subcellular location is the cell membrane. Its function is as follows. G protein-coupled receptor for succinate able to mediate signaling through Gq/GNAQ or Gi/GNAI second messengers depending on the cell type and the processes regulated. Succinate-SUCNR1 signaling serves as a link between metabolic stress, inflammation and energy homeostasisn. In macrophages, plays a range of immune-regulatory roles. During inflammation, succinate-SUCNR1 signaling may act as an anti-inflammatory mediator or boost inflammation depending on the inflammatory status of cells. Hyperpolarizes M2 macrophages versus M1 phenotype through Gq signaling by regulating the transcription of genes involved in immune function. In activated M1 macrophages, plays a pro-inflammatory role in response to LPS. Expressed in dendritic cells, where it is involved in the sensing of immunological danger and enhances immunity. Mediates succinate triggered intracelleular calcium mobilization, induces migratory responses and acts in synergy with Toll-like receptor ligands for the production of proinflammatory cytokines as well as an enhancement of antigen-specific activation of helper T cells. In the small intestine, mediates the activation of tuft cells by dietary succinate and triggers type 2 immunity. In adipocytes, plays an important role in the control of energy metabolism. In response to succinate, controls leptin expression in an AMPK-JNK-CEBPA-dependent as well as circadian clock-regulated manner. In muscle tissue, is expressed in non-muscle cells and coordinates muscle remodeling in response to the succinate produced during exercise training in a paracrine manner. In retina, acts as a mediator of vessel growth during retinal development. In response to succinate, regulates the production of angiogenic factors, including VEGF, by retinal ganglion neurons. This chain is Succinate receptor 1 (Sucnr1), found in Rattus norvegicus (Rat).